The following is a 229-amino-acid chain: Cytochrome c oxidase subunit 2 (229 aa).

Residues 1 to 26 (MSTWANLGLQDSASPLMEQLIFFHDH) lie on the Mitochondrial intermembrane side of the membrane. Residues 27–48 (ALLILVMITVLVGYLMFMLFFN) traverse the membrane as a helical segment. The Mitochondrial matrix portion of the chain corresponds to 49–62 (SYVNRFLLHGQLIE). Residues 63–82 (MIWTILPAIILLFIAMPSLR) traverse the membrane as a helical segment. The Mitochondrial intermembrane segment spans residues 83–229 (LLYLLDEINE…IKWISNSVNS (147 aa)). Positions 161, 196, 198, 200, 204, and 207 each coordinate Cu cation. Glu198 contributes to the Mg(2+) binding site.

This sequence belongs to the cytochrome c oxidase subunit 2 family. As to quaternary structure, component of the cytochrome c oxidase (complex IV, CIV), a multisubunit enzyme composed of a catalytic core of 3 subunits and several supernumerary subunits. The complex exists as a monomer or a dimer and forms supercomplexes (SCs) in the inner mitochondrial membrane with ubiquinol-cytochrome c oxidoreductase (cytochrome b-c1 complex, complex III, CIII). Cu cation is required as a cofactor.

The protein resides in the mitochondrion inner membrane. It catalyses the reaction 4 Fe(II)-[cytochrome c] + O2 + 8 H(+)(in) = 4 Fe(III)-[cytochrome c] + 2 H2O + 4 H(+)(out). Functionally, component of the cytochrome c oxidase, the last enzyme in the mitochondrial electron transport chain which drives oxidative phosphorylation. The respiratory chain contains 3 multisubunit complexes succinate dehydrogenase (complex II, CII), ubiquinol-cytochrome c oxidoreductase (cytochrome b-c1 complex, complex III, CIII) and cytochrome c oxidase (complex IV, CIV), that cooperate to transfer electrons derived from NADH and succinate to molecular oxygen, creating an electrochemical gradient over the inner membrane that drives transmembrane transport and the ATP synthase. Cytochrome c oxidase is the component of the respiratory chain that catalyzes the reduction of oxygen to water. Electrons originating from reduced cytochrome c in the intermembrane space (IMS) are transferred via the dinuclear copper A center (CU(A)) of subunit 2 and heme A of subunit 1 to the active site in subunit 1, a binuclear center (BNC) formed by heme A3 and copper B (CU(B)). The BNC reduces molecular oxygen to 2 water molecules using 4 electrons from cytochrome c in the IMS and 4 protons from the mitochondrial matrix. The sequence is that of Cytochrome c oxidase subunit 2 (mt:CoII) from Drosophila ambigua (Fruit fly).